Consider the following 1585-residue polypeptide: Adhesion G protein-coupled receptor B2 (1585 aa).

An N-terminal signal peptide occupies residues 1–32 (MENTGWMGKGHRMTPACPLLLSVILSLRLATA). The Extracellular segment spans residues 33–936 (FDPAPSACSA…ELAGSPSVPL (904 aa)). N-linked (GlcNAc...) asparagine glycans are attached at residues Asn106, Asn191, and Asn192. Positions 229–238 (AGAGSTTTTS) are enriched in low complexity. The segment at 229–271 (AGAGSTTTTSPGPPAAHTLSNALVPGGPAPPAEADLHSGSSND) is disordered. Residue Ser266 is glycosylated (O-linked (Xyl...) (chondroitin sulfate) serine). TSP type-1 domains lie at 309–362 (DPAA…ATCP), 364–417 (HGVW…AACP), 419–472 (EGQW…LECP), and 475–528 (DSKW…KRCP). Cystine bridges form between Cys321/Cys355, Cys325/Cys361, Cys336/Cys345, Cys376/Cys411, Cys380/Cys416, Cys391/Cys401, Cys431/Cys466, Cys435/Cys471, Cys446/Cys456, Cys487/Cys522, Cys491/Cys527, Cys502/Cys512, Cys534/Cys569, and Cys557/Cys587. A glycan (N-linked (GlcNAc...) asparagine) is linked at Asn356. Residue Asn437 is glycosylated (N-linked (GlcNAc...) asparagine). 2 N-linked (GlcNAc...) asparagine glycosylation sites follow: Asn560 and Asn645. Positions 757-924 (DRLFLPKEVL…AVLAQPPKDL (168 aa)) constitute a GAIN-B domain. The segment at 767-806 (SLSSPGKPATSGAAGSPGRGRGPGTVPPGPGHSHQRLLPA) is disordered. The span at 769 to 780 (SSPGKPATSGAA) shows a compositional bias: low complexity. Asn867 is a glycosylation site (N-linked (GlcNAc...) asparagine). Disulfide bonds link Cys874-Cys906 and Cys894-Cys908. The GPS stretch occupies residues 874–924 (CASWDYSRADASSGDWDTENCQTLETQAAHTRCQCQHLSTFAVLAQPPKDL). Residues 937–957 (VIGCAVSCMALLTLLAIYAAF) traverse the membrane as a helical segment. Topologically, residues 958–965 (WRFIKSER) are cytoplasmic. Residues 966–986 (SIILLNFCLSILASNILILVG) traverse the membrane as a helical segment. The Extracellular segment spans residues 987–994 (QSRVLSKG). The chain crosses the membrane as a helical span at residues 995-1015 (VCTMTAAFLHFFFLSSFCWVL). Residues 1016 to 1036 (TEAWQSYLAVIGRMRTRLVRK) lie on the Cytoplasmic side of the membrane. A helical membrane pass occupies residues 1037-1057 (RFLCLGWGLPALVVAVSVGFT). Over 1058–1078 (RTKGYGTSSYCWLSLEGGLLY) the chain is Extracellular. The chain crosses the membrane as a helical span at residues 1079-1099 (AFVGPAAVIVLVNMLIGIIVF). Topologically, residues 1100–1121 (NKLMARDGISDKSKKQRAGSER) are cytoplasmic. A helical transmembrane segment spans residues 1122–1142 (CPWASLLLPCSACGAVPSPLL). Topologically, residues 1143-1153 (SSASARNAMAS) are extracellular. The helical transmembrane segment at 1154–1174 (LWSSCVVLPLLALTWMSAVLA) threads the bilayer. The Cytoplasmic portion of the chain corresponds to 1175 to 1585 (MTDRRSVLFQ…PPDGDFQTEV (411 aa)). Tyr1351 is subject to Phosphotyrosine. 3 disordered regions span residues 1359-1385 (LSLQ…PRRA), 1423-1454 (FQPP…GSTM), and 1498-1585 (YRSQ…QTEV). The segment covering 1372–1382 (DAPRARPEGTP) has biased composition (basic and acidic residues). A compositionally biased stretch (polar residues) spans 1543 to 1552 (SWSTFKSMTL). Over residues 1575-1585 (EPPDGDFQTEV) the composition is skewed to acidic residues.

It belongs to the G-protein coupled receptor 2 family. Adhesion G-protein coupled receptor (ADGR) subfamily. As to quaternary structure, heterodimer of 2 chains generated by proteolytic processing; the large extracellular N-terminal fragment and the membrane-bound C-terminal fragment predominantly remain associated and non-covalently linked. Interacts with GABPB2. Interacts (via carboxy-terminus) with TAX1BP3. Interacts with GNAZ. Interacts with SH3GL2. In terms of processing, glycosylated. Autoproteolytically processed at the GPS region of the GAIN-B domain; this cleavage modulates receptor activity. Additionally, furin is involved in the cleavage at another site, in the middle of the extracellular domain, generating a soluble fragment. In terms of tissue distribution, detected in cerebrospinal fluid (at protein level). Strongly expressed in brain. Also detected in heart, thymus, skeletal muscle, and different cell lines.

It localises to the cell membrane. The protein localises to the secreted. Receptor activity is regulated by proteolytic processing. The long N-terminal has a an inhibitory effect on the constitutive signaling activity. Removal of the N-terminal region induces an increase of the receptor activity. In terms of biological role, orphan G-protein coupled receptor involved in cell adhesion and probably in cell-cell interactions. Activates NFAT-signaling pathway, a transcription factor, via the G-protein GNAZ. Involved in angiogenesis inhibition. The polypeptide is Adhesion G protein-coupled receptor B2 (Homo sapiens (Human)).